The following is a 229-amino-acid chain: UPF0500 protein C1orf216 (229 aa).

The segment at 1 to 144 (MFAIQPGLAE…RGPGPPDPLL (144 aa)) is disordered. The span at 62–71 (SESPSDNQAF) shows a compositional bias: polar residues. Low complexity-rich tracts occupy residues 84–93 (PPEGAEIPGA) and 115–126 (SSSLSIDSRSSS).

This sequence belongs to the UPF0500 family.

This is UPF0500 protein C1orf216 (C1orf216) from Homo sapiens (Human).